Here is a 180-residue protein sequence, read N- to C-terminus: Stathmin-3 (180 aa).

Residues Cys-22 and Cys-24 are each lipidated (S-palmitoyl cysteine). Residues 38-180 enclose the SLD domain; it reads GDMEVKQLDK…NKEQREEMSG (143 aa). Ser-50, Ser-60, Ser-65, Ser-68, Ser-72, Ser-73, and Ser-81 each carry phosphoserine. The segment at 58 to 81 is disordered; that stretch reads LKSPSDLSPESPVLSSPPKRKDAS. Positions 60–74 are enriched in low complexity; sequence SPSDLSPESPVLSSP. Residues 75–179 adopt a coiled-coil conformation; it reads PKRKDASLEE…RNKEQREEMS (105 aa).

It belongs to the stathmin family. In terms of assembly, interacts with STAT3. Interacts with CLU (secreted form); this interaction may act as an important modulator during neuronal differentiation. N-terminal palmitoylation promotes specific anchoring to the cytosolic leaflet of Golgi membranes and subsequent vesicular trafficking along dendrites and axons. Neuronal Stathmins are substrates for palmitoyltransferases ZDHHC3, ZDHHC7 and ZDHHC15. Neuron specific.

The protein localises to the golgi apparatus. The protein resides in the cell projection. It is found in the growth cone. Its subcellular location is the axon. It localises to the cytoplasm. The protein localises to the cytosol. Functionally, exhibits microtubule-destabilizing activity, which is antagonized by STAT3. The chain is Stathmin-3 (Stmn3) from Rattus norvegicus (Rat).